A 495-amino-acid chain; its full sequence is Chromosomal replication initiator protein DnaA (495 aa).

Positions 1–83 are domain I, interacts with DnaA modulators; that stretch reads MSVALWQQCL…KVQLTVGSRR (83 aa). Residues 83–158 are domain II; that stretch reads RNVAMSSPRD…QVEGSLKHQS (76 aa). The tract at residues 86-127 is disordered; the sequence is AMSSPRDLGAPVSATTMNASRPTEAPAVHAAPRAKGDYADEQ. The domain III, AAA+ region stretch occupies residues 159–375; sequence GLNPNFTFET…GALKKVIADS (217 aa). 4 residues coordinate ATP: Gly-203, Gly-205, Lys-206, and Thr-207. The tract at residues 376-495 is domain IV, binds dsDNA; that stretch reads HFMGKPITQD…YKNLLRLLTS (120 aa).

This sequence belongs to the DnaA family. In terms of assembly, oligomerizes as a right-handed, spiral filament on DNA at oriC.

Its subcellular location is the cytoplasm. In terms of biological role, plays an essential role in the initiation and regulation of chromosomal replication. ATP-DnaA binds to the origin of replication (oriC) to initiate formation of the DNA replication initiation complex once per cell cycle. Binds the DnaA box (a 9 base pair repeat at the origin) and separates the double-stranded (ds)DNA. Forms a right-handed helical filament on oriC DNA; dsDNA binds to the exterior of the filament while single-stranded (ss)DNA is stabiized in the filament's interior. The ATP-DnaA-oriC complex binds and stabilizes one strand of the AT-rich DNA unwinding element (DUE), permitting loading of DNA polymerase. After initiation quickly degrades to an ADP-DnaA complex that is not apt for DNA replication. Binds acidic phospholipids. In Chromohalobacter salexigens (strain ATCC BAA-138 / DSM 3043 / CIP 106854 / NCIMB 13768 / 1H11), this protein is Chromosomal replication initiator protein DnaA.